A 429-amino-acid polypeptide reads, in one-letter code: ETS domain-containing protein Elk-1 (429 aa).

Residues 5-86 constitute a DNA-binding region (ETS); sequence VTLWQFLLQL…SGQKFVYKFV (82 aa). Disordered stretches follow at residues 119 to 146, 165 to 204, and 227 to 253; these read HAGPGDTATGKPGTPKGAGMTGQGGLAR, SLQPQPQPPIPPRPASVLPNTTPAGVPAPASGSRSTSPNP, and APNQKSEELSLDPSFGHPQPPEVKVEG. A compositionally biased stretch (pro residues) spans 169–178; the sequence is QPQPPIPPRP. Residues K231, K250, and K255 each participate in a glycyl lysine isopeptide (Lys-Gly) (interchain with G-Cter in SUMO) cross-link. The segment covering 302 to 312 has biased composition (polar residues); the sequence is STSTTEITQPQ. The segment at 302–354 is disordered; that stretch reads STSTTEITQPQKGRKPRDLELPLSPSLLGGQGPERTPGSGTSSGLQAPGPALT. The residue at position 325 (S325) is a Phosphoserine; by MAPK1. T337, T354, T364, and T369 each carry phosphothreonine; by MAPK1. A sufficient for interaction with MAD2L2 region spans residues 350–400; the sequence is GPALTPSLLPTHTLTPVLLTPSSLPPSIHFWSTLSPIAPRSPAKLSFQFPS. The O-linked (GlcNAc) threonine glycan is linked to T382. Residue S384 is modified to Phosphoserine; by MAPK1 and MAPK8. S390 is modified (phosphoserine; by MAPK1). T418 is modified (phosphothreonine; by MAPK1). S423 carries the post-translational modification Phosphoserine; by MAPK1.

The protein belongs to the ETS family. In terms of assembly, interacts in its sumoylated form with PIAS2/PIASX which enhances its transcriptional activator activity. Interacts with MAD2L2; the interaction is direct and promotes phosphorylation by the kinases MAPK8 and/or MAPK9. Interacts with POU1F1. In terms of processing, sumoylation represses transcriptional activator activity as it results in recruitment of HDAC2 to target gene promoters which leads to decreased histone acetylation and reduced transactivator activity. It also regulates nuclear retention. On mitogenic stimulation, phosphorylated on C-terminal serine and threonine residues by MAPK1 but also MAPK8 and/or MAPK9. Phosphorylation leads to loss of sumoylation and restores transcriptional activator activity. Phosphorylated and activated by CaMK4, MAPK11, MAPK12 and MAPK14. Upon bFGF stimulus, phosphorylated by PAK1. Phosphorylated by PRP4K at Thr-418; phosphorylation activation ELK1 transcriptional activity. As to expression, predominantly expressed in the brain, and to a lesser extent in the heart, liver and muscle.

The protein localises to the nucleus. Transcription factor that binds to purine-rich DNA sequences. Forms a ternary complex with SRF and the ETS and SRF motifs of the serum response element (SRE) on the promoter region of immediate early genes such as FOS and IER2. Induces target gene transcription upon JNK and MAPK-signaling pathways stimulation. This chain is ETS domain-containing protein Elk-1, found in Mus musculus (Mouse).